The primary structure comprises 282 residues: Fibrinogen-like protein A (282 aa).

The signal sequence occupies residues 1 to 24 (MFSFIMKAAILLILVGCISFCISS). A Fibrinogen C-terminal domain is found at 61 to 281 (SHSPEYPRDC…FAEMKLRNRS (221 aa)). Disulfide bonds link Cys-70–Cys-101 and Cys-224–Cys-240.

The protein is Fibrinogen-like protein A of Apostichopus parvimensis (Warty sea cucumber).